The following is a 162-amino-acid chain: MGLETEKADAQIYMDEDSYSRHSGLGYPEPEKCAKSTQDRDPRGLNTHLKMGFEDVIGEPESTHSFDKVWICSHALFEVSKYLIYKVLTVLLAIPLAFVAGILFATLSCLHIWIVVPFVKTCLMVLPSVQTVWHSITDGFIAPLYKSMGLIFSSISLRLSPE.

Residues 1–86 (MGLETEKADA…FEVSKYLIYK (86 aa)) lie on the Cytoplasmic side of the membrane. Tyr19 carries the phosphotyrosine; by SRC modification. The segment at 19 to 40 (YSRHSGLGYPEPEKCAKSTQDR) is disordered. Residues Ser20 and Ser23 each carry the phosphoserine modification. Tyr27 carries the post-translational modification Phosphotyrosine; by SRC. Residues 29-40 (EPEKCAKSTQDR) are compositionally biased toward basic and acidic residues. Phosphoserine is present on Ser36. An intramembrane region (helical) is located at residues 87 to 107 (VLTVLLAIPLAFVAGILFATL). The Cytoplasmic portion of the chain corresponds to 108–162 (SCLHIWIVVPFVKTCLMVLPSVQTVWHSITDGFIAPLYKSMGLIFSSISLRLSPE).

The protein belongs to the caveolin family. Monomer or homodimer. Interacts with CAV1; the interaction forms a stable heterooligomeric complex that is required for targeting to lipid rafts and for caveolae formation. Tyrosine phosphorylated forms do not form heterooligomers with the Tyr-19-phosphorylated form existing as a monomer or dimer, and the Tyr-27-form as a monomer only. Interacts (tyrosine phosphorylated form) with the SH2 domain-containing proteins, RASA1, NCK1 and SRC. Interacts (tyrosine phosphorylated form) with INSR, the interaction (Tyr-27-phosphorylated form) is increased on insulin stimulation. Interacts (Tyr-19 phosphorylated form) with MAPK1 (phosphorylated form); the interaction, promoted by insulin, leads to nuclear location and MAPK1 activation. Interacts with STAT3; the interaction is increased on insulin-induced tyrosine phosphorylation leading to STAT activation. In terms of processing, phosphorylated on serine and tyrosine residues. CAV1 promotes phosphorylation on Ser-23 which then targets the complex to the plasma membrane, lipid rafts and caveolae. Phosphorylation on Ser-36 appears to modulate mitosis in endothelial cells. Phosphorylation on both Tyr-19 and Tyr-27 is required for insulin-induced 'Ser-727' phosphorylation of STAT3 and its activation. Phosphorylation on Tyr-19 is required for insulin-induced phosphorylation of MAPK1 and DNA binding of STAT3. Tyrosine phosphorylation is induced by both EGF and insulin (By. similarity).

The protein resides in the nucleus. Its subcellular location is the cytoplasm. The protein localises to the golgi apparatus membrane. It localises to the cell membrane. It is found in the membrane. The protein resides in the caveola. May act as a scaffolding protein within caveolar membranes. Interacts directly with G-protein alpha subunits and can functionally regulate their activity. Acts as an accessory protein in conjunction with CAV1 in targeting to lipid rafts and driving caveolae formation. The Ser-36 phosphorylated form has a role in modulating mitosis in endothelial cells. Positive regulator of cellular mitogenesis of the MAPK signaling pathway. Required for the insulin-stimulated nuclear translocation and activation of MAPK1 and STAT3, and the subsequent regulation of cell cycle progression. The chain is Caveolin-2 (CAV2) from Didelphis virginiana (North American opossum).